The following is a 570-amino-acid chain: MTEPIISFKDFSFQYHSQATPTLQKINVDIYPGEKVLVVGASGSGKSTFANCINGLIPFKTKGNITGELYINNQDATVSCLHDRSNVVGTVLQDTDGQFIGLTAAEDMAFLLENNCVEQDDMKKNVSYWAEKVGMIEHLNHRPQDLSGGQKQRVSLGGILIHRTPILILDEPLANLDPATGHETLRLLNNIHEETKSTMIIVEHRLEESLDDTFDRVLLFKDGKIIANTTPSDLLKSSKLKEAGIREPLYCTALKYAEVDVESIDNLANLRDVCMSEHVKFKVKKWIDETSANNDNKYKSEPLLELNEVCVQYSDYSNSVLNNVQLNVYRREMLSIVGHNGAGKSTLAKAICGFLDITGNIQFCNRGFNQLSISERSEFVGYVMQNPNHMISEKMIYDEVALGLRARGMKESDIKIRVENVLKICGLYAFRNWPIVALSYGQKKRVTIASVLVLNPEIIILDEPTAGQDFYHYNEIMSFLIELNRQGKTIIMITHDMHLLSEYSSRTVVLSKGQVVADTTPVLVLNDKKICEIASLRQTSLFEMAEYIGISEPQKLVQLFINHDRKVRRQ.

ABC transporter domains are found at residues 6 to 247 (ISFK…GIRE) and 304 to 537 (LELN…ASLR). ATP is bound by residues 40–47 (GASGSGKS) and 338–345 (GHNGAGKS).

The protein belongs to the ABC transporter superfamily.

It is found in the cell membrane. Functionally, probably part of an ABC transporter complex. Responsible for energy coupling to the transport system. This Staphylococcus aureus (strain MW2) protein is Putative ABC transporter ATP-binding protein MW2603.